Consider the following 421-residue polypeptide: Actin-related protein 6 (421 aa).

This sequence belongs to the actin family. ARP6 subfamily. In terms of assembly, component of the SWR1 chromatin-remodeling complex composed of at least ARP6/ESD1/SUF3, PIE1, SWC6, SWC2 and H2AZs (HTA8, HTA9, HTA11). Interacts directly with SWC6/SEF and PIE1. Also interacts with H2A.F/Z proteins. In terms of tissue distribution, mostly expressed in flowers, and, to a lower extent, in seedlings, shoot apex, stems, siliques, seeds, and roots (at protein level).

It is found in the nucleus. The protein localises to the cytoplasm. In terms of biological role, component of the SWR1 complex which mediates the ATP-dependent exchange of histone H2A for the H2A variant H2A.F/Z leading to transcriptional regulation of selected genes (e.g. FLC) by chromatin remodeling. Binds to the promoter region of FLC chromatin. Required for the activation of FLC and FLC/MAF genes expression to levels that inhibit flowering, through both histone H3 and H4 acetylation and methylation mechanisms. Involved in several developmental processes including organization of plant organs, leaves formation, flowering time repression, and fertility. Modulates photoperiod-dependent epidermal leaves cell development; promotes cell division in long days, and cell expansion/division in short days. May be involved in the regulation of pathogenesis-related proteins (PRs). The protein is Actin-related protein 6 (ARP6) of Arabidopsis thaliana (Mouse-ear cress).